Reading from the N-terminus, the 309-residue chain is Protein FdhE homolog (309 aa).

This sequence belongs to the FdhE family.

It localises to the cytoplasm. Its function is as follows. Necessary for formate dehydrogenase activity. The chain is Protein FdhE homolog from Pasteurella multocida (strain Pm70).